A 132-amino-acid chain; its full sequence is Interleukin-5 (132 aa).

Positions 1-19 (MHLRLTLVALGAAYVCANA) are cleaved as a signal peptide. 2 N-linked (GlcNAc...) asparagine glycosylation sites follow: N74 and N88.

Belongs to the IL-5 family. As to quaternary structure, homodimer; disulfide-linked. Interacts with IL5RA. Interacts with CSF2RB.

It localises to the secreted. Functionally, homodimeric cytokine expressed predominantly by T-lymphocytes and NK cells that plays an important role in the survival, differentiation, and chemotaxis of eosinophils. Also acts on activated and resting B-cells to induce immunoglobulin production, growth, and differentiation. Mechanistically, exerts its biological effects through a receptor composed of IL5RA subunit and the cytokine receptor common subunit beta/CSF2RB. Binding to the receptor leads to activation of various kinases including LYN, SYK and JAK2 and thereby propagates signals through the RAS-MAPK and JAK-STAT5 pathways respectively. This is Interleukin-5 (IL5) from Ovis aries (Sheep).